The sequence spans 493 residues: Glutathione hydrolase 6 (493 aa).

The Cytoplasmic segment spans residues 1 to 54; the sequence is MERAEEPVVYQKLLPWEPSLESEEEVEEEETSEALVLNPRRHQDSSRNKAGGLP. Residues 19–52 are disordered; the sequence is SLESEEEVEEEETSEALVLNPRRHQDSSRNKAGG. Over residues 20-32 the composition is skewed to acidic residues; the sequence is LESEEEVEEEETS. The helical; Signal-anchor for type II membrane protein transmembrane segment at 55-75 threads the bilayer; that stretch reads GTWARVVAALLLLAVGCSLAV. The Extracellular segment spans residues 76 to 493; the sequence is RQLQNQGRST…PHACCPFQGF (418 aa). The interval 83–105 is disordered; sequence RSTGSLGSVAPPPGGHSHGPGVY. N-linked (GlcNAc...) asparagine glycosylation is found at N161 and N370. Residues 442 to 455 show a composition bias toward low complexity; the sequence is PPTQAQHQHQGQQE. Residues 442–464 are disordered; it reads PPTQAQHQHQGQQEPTEHPSTCG.

The protein belongs to the gamma-glutamyltransferase family. In terms of assembly, heterodimer composed of the light and heavy chains. The active site is located in the light chain. Cleaved by autocatalysis into a large and a small subunit and the autocatalytic cleavage is essential to the functional activation of the enzyme.

The protein resides in the membrane. The catalysed reaction is an N-terminal (5-L-glutamyl)-[peptide] + an alpha-amino acid = 5-L-glutamyl amino acid + an N-terminal L-alpha-aminoacyl-[peptide]. It catalyses the reaction glutathione + H2O = L-cysteinylglycine + L-glutamate. The enzyme catalyses an S-substituted glutathione + H2O = an S-substituted L-cysteinylglycine + L-glutamate. It participates in sulfur metabolism; glutathione metabolism. Its function is as follows. Hydrolyzes and transfers gamma-glutamyl moieties from glutathione and other gamma-glutamyl compounds to acceptors. The chain is Glutathione hydrolase 6 from Homo sapiens (Human).